Reading from the N-terminus, the 492-residue chain is N-succinylglutamate 5-semialdehyde dehydrogenase (492 aa).

An NAD(+)-binding site is contributed by Gly-220–Gly-225. Catalysis depends on residues Glu-243 and Cys-277.

The protein belongs to the aldehyde dehydrogenase family. AstD subfamily.

The catalysed reaction is N-succinyl-L-glutamate 5-semialdehyde + NAD(+) + H2O = N-succinyl-L-glutamate + NADH + 2 H(+). Its pathway is amino-acid degradation; L-arginine degradation via AST pathway; L-glutamate and succinate from L-arginine: step 4/5. In terms of biological role, catalyzes the NAD-dependent reduction of succinylglutamate semialdehyde into succinylglutamate. The polypeptide is N-succinylglutamate 5-semialdehyde dehydrogenase (Shigella flexneri serotype 5b (strain 8401)).